We begin with the raw amino-acid sequence, 124 residues long: Small ribosomal subunit protein uS11 (124 aa).

This sequence belongs to the universal ribosomal protein uS11 family. As to quaternary structure, part of the 30S ribosomal subunit.

Functionally, located on the platform of the 30S subunit. In Methanococcus aeolicus (strain ATCC BAA-1280 / DSM 17508 / OCM 812 / Nankai-3), this protein is Small ribosomal subunit protein uS11.